A 1405-amino-acid polypeptide reads, in one-letter code: Sterol 3-beta-glucosyltransferase (1405 aa).

Composition is skewed to basic and acidic residues over residues 1 to 16 (MRPF…DRKL) and 95 to 105 (TGQRPRKESSV). 3 disordered regions span residues 1 to 27 (MRPF…SASR), 83 to 186 (ARFD…SATP), and 203 to 230 (DLKA…ASVS). Over residues 106-115 (RKGTSVSVNT) the composition is skewed to polar residues. Over residues 116 to 126 (SSLDPSQRSSS) the composition is skewed to low complexity. The span at 206 to 218 (ASSTERSQSSLNE) shows a compositional bias: polar residues. Residues 246–285 (EKVLVEYACSLLQSMLLQGYMYVTEGHICFYAYLPKKSTV) enclose the GRAM 1 domain. Residues 285–384 (VAIKSGYLHK…WVKALQKVIF (100 aa)) enclose the PH domain. 2 disordered regions span residues 461 to 526 (SQHL…DSSD) and 566 to 642 (TIYG…SGAP). The span at 483–493 (RWSLTSGTSRA) shows a compositional bias: polar residues. Over residues 570–589 (LDRRPSGRERRGRRNSDETA) the composition is skewed to basic and acidic residues. A compositionally biased stretch (polar residues) spans 590-603 (RSPSTRVNVGTGQQ). Positions 606 to 624 (ELDRRTDGNTSGREARDTT) are enriched in basic and acidic residues. Residues 626–642 (ESDQYTQDPTKSFSGAP) are compositionally biased toward polar residues. The region spanning 724 to 790 (DRFRAHFALP…RDIENVEKEK (67 aa)) is the GRAM 2 domain. 10 residues coordinate UDP-alpha-D-glucose: S911, R912, D914, A1214, H1216, H1229, G1233, T1234, D1253, and Q1254. The segment at 1330 to 1367 (SIASSTPFSPTPSAKTAAEQDADDDVEDSEEWTFVGDD) is disordered. A compositionally biased stretch (low complexity) spans 1332 to 1348 (ASSTPFSPTPSAKTAAE). Residues 1349-1367 (QDADDDVEDSEEWTFVGDD) are compositionally biased toward acidic residues.

It belongs to the glycosyltransferase 28 family.

The protein resides in the cytoplasm. It localises to the preautophagosomal structure membrane. The enzyme catalyses a sterol + UDP-alpha-D-glucose = a sterol 3-beta-D-glucoside + UDP + H(+). The catalysed reaction is ergosterol + UDP-alpha-D-glucose = ergosteryl 3-beta-D-glucoside + UDP + H(+). In terms of biological role, sterol glycosyltransferase responsible for the glycosylation of ergosterol to form ergosterol-glucoside. The protein is Sterol 3-beta-glucosyltransferase of Aspergillus fumigatus (strain ATCC MYA-4609 / CBS 101355 / FGSC A1100 / Af293) (Neosartorya fumigata).